We begin with the raw amino-acid sequence, 60 residues long: Mating pheromone En-2 (60 aa).

4 disulfide bridges follow: Cys-11-Cys-39, Cys-24-Cys-35, Cys-31-Cys-57, and Cys-36-Cys-48.

It localises to the secreted. Mating ciliate pheromones (or gamones) are diffusible extracellular communication signals that distinguish different intraspecific classes of cells commonly referred to as 'mating types'. They prepare the latter for conjugation by changing their cell surface properties. This chain is Mating pheromone En-2, found in Euplotes nobilii (Ciliate).